We begin with the raw amino-acid sequence, 801 residues long: Palmitoyl thioesterase CPT1C (801 aa).

Over 1–49 the chain is Cytoplasmic; sequence MAEAHQASSLLSSLSSDGAEVELSSSVWQEIYLSALRSWKRNLWRVWND. The chain crosses the membrane as a helical span at residues 50–70; sequence FLAGVVPATPLSWLFLFSTIQ. Over 71–103 the chain is Mitochondrial intermembrane; sequence LACLLQLDPSLGLMEKIKELLPDWGGQHHQLQG. The helical transmembrane segment at 104-124 threads the bilayer; the sequence is LLAAAVFASCLWGTLIFTLHV. Residues 125-801 lie on the Cytoplasmic side of the membrane; that stretch reads ALRLLLSHHG…PNIPKSSTNL (677 aa). His469 (proton acceptor) is an active-site residue. 551–563 contributes to the CoA binding site; it reads GKSFIKGCHVSSD. Positions 585, 587, and 598 each coordinate (R)-carnitine. The interval 760–801 is required for interaction with GRIA1; it reads LFQAGQQFKRQFTGLGESSGWKYSNLSCKTVDPNIPKSSTNL.

Belongs to the carnitine/choline acetyltransferase family. As to quaternary structure, peripherally associated with AMPAR complex. AMPAR complex consists of an inner core made of 4 pore-forming GluA/GRIA proteins (GRIA1, GRIA2, GRIA3 and GRIA4) and 4 major auxiliary subunits arranged in a twofold symmetry. One of the two pairs of distinct binding sites is occupied either by CNIH2, CNIH3 or CACNG2, CACNG3. The other harbors CACNG2, CACNG3, CACNG4, CACNG8 or GSG1L. This inner core of AMPAR complex is complemented by outer core constituents binding directly to the GluA/GRIA proteins at sites distinct from the interaction sites of the inner core constituents. Outer core constituents include at least PRRT1, PRRT2, CKAMP44/SHISA9, FRRS1L and NRN1. The proteins of the inner and outer core serve as a platform for other, more peripherally associated AMPAR constituents, including CPT1C. Alone or in combination, these auxiliary subunits control the gating and pharmacology of the AMPAR complex and profoundly impact their biogenesis and protein processing. Interacts with SACM1L; the interaction regulates SACM1L phosphatidylinositol-3-phosphatase activity and translocation to endoplasmic reticulum/trans Golgi network in a malonyl-CoA dependent manner. Interacts with ATL1. Expressed in brain (at protein level).

Its subcellular location is the synapse. The protein localises to the cell projection. It is found in the dendrite. It localises to the axon. The protein resides in the endoplasmic reticulum membrane. The catalysed reaction is S-hexadecanoyl-L-cysteinyl-[protein] + H2O = L-cysteinyl-[protein] + hexadecanoate + H(+). In terms of biological role, palmitoyl thioesterase specifically expressed in the endoplasmic reticulum of neurons. Modulates the trafficking of the glutamate receptor, AMPAR, to plasma membrane through depalmitoylation of GRIA1. Also regulates AMPR trafficking through the regulation of SACM1L phosphatidylinositol-3-phosphatase activity by interaction in a malonyl-CoA dependent manner. Binds malonyl-CoA and couples malonyl-CoA to ceramide levels, necessary for proper spine maturation and contributing to systemic energy homeostasis and appetite control. Binds to palmitoyl-CoA, but does not have carnitine palmitoyltransferase 1 catalytic activity or at very low levels. This is Palmitoyl thioesterase CPT1C (Cpt1c) from Rattus norvegicus (Rat).